Here is a 95-residue protein sequence, read N- to C-terminus: Aspartyl/glutamyl-tRNA(Asn/Gln) amidotransferase subunit C (95 aa).

This sequence belongs to the GatC family. As to quaternary structure, heterotrimer of A, B and C subunits.

It carries out the reaction L-glutamyl-tRNA(Gln) + L-glutamine + ATP + H2O = L-glutaminyl-tRNA(Gln) + L-glutamate + ADP + phosphate + H(+). The enzyme catalyses L-aspartyl-tRNA(Asn) + L-glutamine + ATP + H2O = L-asparaginyl-tRNA(Asn) + L-glutamate + ADP + phosphate + 2 H(+). Allows the formation of correctly charged Asn-tRNA(Asn) or Gln-tRNA(Gln) through the transamidation of misacylated Asp-tRNA(Asn) or Glu-tRNA(Gln) in organisms which lack either or both of asparaginyl-tRNA or glutaminyl-tRNA synthetases. The reaction takes place in the presence of glutamine and ATP through an activated phospho-Asp-tRNA(Asn) or phospho-Glu-tRNA(Gln). This Chloroherpeton thalassium (strain ATCC 35110 / GB-78) protein is Aspartyl/glutamyl-tRNA(Asn/Gln) amidotransferase subunit C.